The following is a 203-amino-acid chain: Glycerol-3-phosphate acyltransferase (203 aa).

Transmembrane regions (helical) follow at residues 12–32 (ATLLCLAFGYLLGSIPFGLIL), 66–86 (TLLLDALKGTAAAAIASLWGV), 88–108 (AGIAAGLAAFLGHLFPVWLSF), 118–138 (IGVLLGLAPLMVPAFAAIWLA), and 159–179 (IALYATGYGKVALLFALMTVI).

Belongs to the PlsY family. Probably interacts with PlsX.

The protein resides in the cell inner membrane. It catalyses the reaction an acyl phosphate + sn-glycerol 3-phosphate = a 1-acyl-sn-glycero-3-phosphate + phosphate. It participates in lipid metabolism; phospholipid metabolism. Catalyzes the transfer of an acyl group from acyl-phosphate (acyl-PO(4)) to glycerol-3-phosphate (G3P) to form lysophosphatidic acid (LPA). This enzyme utilizes acyl-phosphate as fatty acyl donor, but not acyl-CoA or acyl-ACP. This chain is Glycerol-3-phosphate acyltransferase, found in Sinorhizobium fredii (strain NBRC 101917 / NGR234).